The sequence spans 586 residues: MVTHRQRYREKVSQMVSWGHWFALFNILLATLLGSRYLFVADWPTTLAGRIYSYLSIVGHFSFLVFATYLLILFPLTFIVMSQRLMRFLSAILATAGMTLLLIDSEVFTRFHLHLNPIVWELVINPDQNEMARDWQLMFISVPVILLIEMLFATWSWQKLRSLTRRRHFARPLAAFFFVSFIASHLIYIWADANFYRPITMQRANLPLSYPMTARRFLEKHGLLDAQEYQRRLVEQGNPEAVSVQYPLSNLHYRDMGTGQNVLLITVDGLNYSRFEKQMPELATFAEQNIDFTRHMSSGNTTDNGIFGLFYGISPGYMDGVLSTRTPAALITALNQQGYQLGLFSSDGFASPLYRQALLSDFSMPAAQTQSDAQTASQWIDWLGRYAQEDNRWFSWISFSGTNIDDSNQKNFVKRYASAASDVDAQINRVLNALREAGKFDNTVVIITAGRGIPLTPEENRFDWSQGHLQVPLVIHWPGTPAQRINVLTDHTDVMTTLMQRLLHVSTPANEYSQGQDIFTVPRRHNWVTAADGSTLAITTPQMTLVLNNNGHYQTYDLHGEKIKDQKPQLSLLLQVLTEEKRFIAN.

The Cytoplasmic segment spans residues Met-1–His-20. The helical transmembrane segment at Trp-21–Trp-43 threads the bilayer. The Periplasmic portion of the chain corresponds to Pro-44 to Ile-57. A helical membrane pass occupies residues Val-58 to Val-80. The Cytoplasmic segment spans residues Met-81–Arg-84. A helical transmembrane segment spans residues Leu-85–Ile-103. The Periplasmic segment spans residues Asp-104–Asp-134. Residues Trp-135–Trp-157 form a helical membrane-spanning segment. Residues Gln-158–His-168 lie on the Cytoplasmic side of the membrane. A helical transmembrane segment spans residues Phe-169–Ala-191. At Asp-192–Asn-586 the chain is on the periplasmic side.

The protein to H.influenzae HI_0842.

The protein resides in the cell inner membrane. This chain is Inner membrane protein YejM (yejM), found in Salmonella typhi.